A 130-amino-acid chain; its full sequence is Small ribosomal subunit protein uS8 (130 aa).

The protein belongs to the universal ribosomal protein uS8 family. In terms of assembly, part of the 30S ribosomal subunit.

Its function is as follows. One of the primary rRNA binding proteins, it binds directly to 16S rRNA central domain where it helps coordinate assembly of the platform of the 30S subunit. The sequence is that of Small ribosomal subunit protein uS8 from Methanosarcina barkeri (strain Fusaro / DSM 804).